The following is a 588-amino-acid chain: Ribonuclease Y (588 aa).

A helical transmembrane segment spans residues valine 7–valine 27. Positions valine 278 to alanine 359 constitute a KH domain. Residues valine 404–glycine 497 form the HD domain.

This sequence belongs to the RNase Y family.

The protein resides in the cell membrane. Its function is as follows. Endoribonuclease that initiates mRNA decay. The sequence is that of Ribonuclease Y from Salinispora tropica (strain ATCC BAA-916 / DSM 44818 / JCM 13857 / NBRC 105044 / CNB-440).